A 210-amino-acid polypeptide reads, in one-letter code: Outer-membrane lipoprotein carrier protein (210 aa).

Positions 1–26 are cleaved as a signal peptide; sequence MHMIRRAAGALAVFAVAALAAAPAWA.

The protein belongs to the LolA family. As to quaternary structure, monomer.

The protein localises to the periplasm. Its function is as follows. Participates in the translocation of lipoproteins from the inner membrane to the outer membrane. Only forms a complex with a lipoprotein if the residue after the N-terminal Cys is not an aspartate (The Asp acts as a targeting signal to indicate that the lipoprotein should stay in the inner membrane). This chain is Outer-membrane lipoprotein carrier protein, found in Bordetella pertussis (strain Tohama I / ATCC BAA-589 / NCTC 13251).